The chain runs to 421 residues: AP-3 complex subunit mu (421 aa).

The 243-residue stretch at 178–420 (QNKIFFDIIE…TTKAGKFQVR (243 aa)) folds into the MHD domain.

The protein belongs to the adaptor complexes medium subunit family. As to quaternary structure, adaptor protein complex 3 (AP-3) is a heterotetramer composed of two large adaptins (delta-type subunit and beta-type subunit), a medium adaptin (mu-type subunit) and a small adaptin (sigma-type subunit).

Its subcellular location is the endosome membrane. Its function is as follows. Part of the AP-3 complex, an adaptor-related complex which is essential for the compartmentalization of the endocytic pathway. This is AP-3 complex subunit mu (apm3) from Dictyostelium discoideum (Social amoeba).